Here is a 130-residue protein sequence, read N- to C-terminus: Small ribosomal subunit protein uS9 (130 aa).

It belongs to the universal ribosomal protein uS9 family.

The chain is Small ribosomal subunit protein uS9 from Shewanella denitrificans (strain OS217 / ATCC BAA-1090 / DSM 15013).